The following is a 55-amino-acid chain: Caltrin-like protein 2 (55 aa).

The WAP domain maps to 7-55; it reads AINRPGSCPRVMIYCPARHPPNKCTSDYDCPKPQKCCPGYCGKQCYQPE.

In terms of processing, glycosylated.

In terms of biological role, inhibits calcium transport into spermatozoa. The chain is Caltrin-like protein 2 from Cavia porcellus (Guinea pig).